The sequence spans 955 residues: 2-oxoglutarate dehydrogenase E1 component (955 aa).

It belongs to the alpha-ketoglutarate dehydrogenase family. Homodimer. Part of the 2-oxoglutarate dehydrogenase (OGDH) complex composed of E1 (2-oxoglutarate dehydrogenase), E2 (dihydrolipoamide succinyltransferase) and E3 (dihydrolipoamide dehydrogenase); the complex contains multiple copies of the three enzymatic components (E1, E2 and E3). Requires thiamine diphosphate as cofactor.

It carries out the reaction N(6)-[(R)-lipoyl]-L-lysyl-[protein] + 2-oxoglutarate + H(+) = N(6)-[(R)-S(8)-succinyldihydrolipoyl]-L-lysyl-[protein] + CO2. Its function is as follows. E1 component of the 2-oxoglutarate dehydrogenase (OGDH) complex which catalyzes the decarboxylation of 2-oxoglutarate, the first step in the conversion of 2-oxoglutarate to succinyl-CoA and CO(2). The polypeptide is 2-oxoglutarate dehydrogenase E1 component (Bacillus cereus (strain 03BB102)).